The sequence spans 621 residues: Frizzled and smoothened-like protein H (621 aa).

Positions 1-21 are cleaved as a signal peptide; the sequence is MNLKFYNLIFFISFLICCIHG. Over 22–246 the chain is Extracellular; sequence QRYLPVEGGK…VWNQIFKIND (225 aa). Positions 27–166 constitute an FZ domain; that stretch reads VEGGKCEKYI…IEWVKYNLTI (140 aa). 2 cysteine pairs are disulfide-bonded: C32–C103 and C46–C96. Residues N60, N107, N163, N176, and N206 are each glycosylated (N-linked (GlcNAc...) asparagine). Residues 247–267 traverse the membrane as a helical segment; the sequence is VLSSISLACTLILLFTFGILN. Over 268 to 277 the chain is Cytoplasmic; that stretch reads PKLNRFDKKN. Residues 278–298 traverse the membrane as a helical segment; that stretch reads LFFIAGVFGMSVSGVLIAANG. The Extracellular segment spans residues 299–318; the sequence is SEKTVCPTPERYAVNTDRVC. Residues 319–339 form a helical membrane-spanning segment; the sequence is VASGFLVHFSALFAILWWTIG. The Cytoplasmic portion of the chain corresponds to 340-359; sequence LADVYYGIKFVGKKIKIKVR. A helical membrane pass occupies residues 360–380; it reads YYLLATLTISLAFTLVPLGTG. Residues 381–400 are Extracellular-facing; it reads QYQAGLSNVMCFLKDEIYQS. The chain crosses the membrane as a helical span at residues 401–421; sequence MTFFVPLGICLTMGTILMILV. Topologically, residues 422–464 are cytoplasmic; sequence MREIYVIVKSNSTSSSFSSSSSKSKSKSKSSDSISYLKLQVKP. A helical membrane pass occupies residues 465-485; sequence MLNIILFYFTFLYLFLFVRVI. At 486–520 the chain is on the extracellular side; sequence NSRYQEYEDSAIPYMLCLAKGGGDSCRLKGPSAGS. Residues 521 to 541 traverse the membrane as a helical segment; that stretch reads LGYFAYCLRIYGIYLFIISFL. Topologically, residues 542–621 are cytoplasmic; sequence SSRTIKIWKE…RNYNTDDDDL (80 aa). Over residues 575–594 the composition is skewed to low complexity; that stretch reads FSSSKNTSTTQNSTLNNTES. The segment at 575-603 is disordered; it reads FSSSKNTSTTQNSTLNNTESDTSKRGNSS.

This sequence belongs to the G-protein coupled receptor Fz/Smo family.

It localises to the membrane. The sequence is that of Frizzled and smoothened-like protein H (fslH) from Dictyostelium discoideum (Social amoeba).